A 198-amino-acid polypeptide reads, in one-letter code: Proteasome subunit beta type-4 (198 aa).

N-acetylmethionine is present on methionine 1. Serine 76 carries the phosphoserine modification.

Belongs to the peptidase T1B family. The 26S proteasome consists of a 20S proteasome core and two 19S regulatory subunits. The 20S proteasome core is composed of 28 subunits that are arranged in four stacked rings, resulting in a barrel-shaped structure. The two end rings are each formed by seven alpha subunits, and the two central rings are each formed by seven beta subunits. The catalytic chamber with the active sites is on the inside of the barrel.

The protein resides in the cytoplasm. It is found in the nucleus. Its function is as follows. Non-catalytic component of the proteasome which degrades poly-ubiquitinated proteins in the cytoplasm and in the nucleus. It is essential for the regulated turnover of proteins and for the removal of misfolded proteins. The proteasome is a multicatalytic proteinase complex that is characterized by its ability to cleave peptides with Arg, Phe, Tyr, Leu, and Glu adjacent to the leaving group at neutral or slightly basic pH. It has an ATP-dependent proteolytic activity. This subunit has a chymotrypsin-like activity. The sequence is that of Proteasome subunit beta type-4 (PRE1) from Saccharomyces cerevisiae (strain ATCC 204508 / S288c) (Baker's yeast).